The sequence spans 467 residues: 3-isopropylmalate dehydratase large subunit (467 aa).

[4Fe-4S] cluster is bound by residues cysteine 348, cysteine 409, and cysteine 412. Residues 423 to 449 (NERSISTSNRNFEGRQGKGSRTHLASP) are disordered.

Belongs to the aconitase/IPM isomerase family. LeuC type 1 subfamily. Heterodimer of LeuC and LeuD. [4Fe-4S] cluster serves as cofactor.

The enzyme catalyses (2R,3S)-3-isopropylmalate = (2S)-2-isopropylmalate. It functions in the pathway amino-acid biosynthesis; L-leucine biosynthesis; L-leucine from 3-methyl-2-oxobutanoate: step 2/4. Functionally, catalyzes the isomerization between 2-isopropylmalate and 3-isopropylmalate, via the formation of 2-isopropylmaleate. In Bifidobacterium longum subsp. infantis (strain ATCC 15697 / DSM 20088 / JCM 1222 / NCTC 11817 / S12), this protein is 3-isopropylmalate dehydratase large subunit.